The chain runs to 777 residues: Aconitate hydratase, mitochondrial (777 aa).

Substrate contacts are provided by residues Gln96 and 189–191; that span reads DSH. [4Fe-4S] cluster is bound by residues Cys383, Cys446, and Cys449. Substrate is bound by residues Arg472, Arg477, Arg605, and 668 to 669; that span reads SR.

The protein belongs to the aconitase/IPM isomerase family. As to quaternary structure, monomer. [4Fe-4S] cluster is required as a cofactor.

It localises to the mitochondrion. It catalyses the reaction citrate = D-threo-isocitrate. Its pathway is carbohydrate metabolism; tricarboxylic acid cycle; isocitrate from oxaloacetate: step 2/2. In terms of biological role, catalyzes the isomerization of citrate to isocitrate via cis-aconitate, a step in the citric acid cycle. This is Aconitate hydratase, mitochondrial (ACO1) from Candida albicans (strain SC5314 / ATCC MYA-2876) (Yeast).